The following is a 209-amino-acid chain: Small ribosomal subunit protein uS3 (209 aa).

Residues 38–107 form the KH type-2 domain; sequence IRNFIKKNYN…KFGIDIIELK (70 aa).

It belongs to the universal ribosomal protein uS3 family. In terms of assembly, part of the 30S ribosomal subunit. Forms a tight complex with proteins S10 and S14.

Its function is as follows. Binds the lower part of the 30S subunit head. Binds mRNA in the 70S ribosome, positioning it for translation. This chain is Small ribosomal subunit protein uS3, found in Fervidobacterium nodosum (strain ATCC 35602 / DSM 5306 / Rt17-B1).